Here is a 405-residue protein sequence, read N- to C-terminus: Cytochrome P450 107B1 (405 aa).

Cys352 is a binding site for heme.

It belongs to the cytochrome P450 family. It depends on heme as a cofactor.

It localises to the cytoplasm. Functionally, not known, probably involved in the catabolism of octane and guaiacol. It displays a weak activity in the O-dealkylation of 7-ethoxycoumarin. This chain is Cytochrome P450 107B1 (cyp107B1), found in Saccharopolyspora erythraea (strain ATCC 11635 / DSM 40517 / JCM 4748 / NBRC 13426 / NCIMB 8594 / NRRL 2338).